We begin with the raw amino-acid sequence, 405 residues long: MSDITVANYHAFPDARGHFGRYGGRFVAETLIGPLQELAQAYDAARHDPDFIAAYNKDLKDYVGRPSPIYHAERLSRKVGGAQILLKREDLNHTGAHKINNTIGQALLAARMGKTRIIAETGAGQHGVASATVAARLGLECVVYMGATDIQRQQINVYRMKLLGATVVPVTSGSATLKDALNEAMRDWVTHVGHTFYIIGTVAGPDPYPRMVRDFNAIVGREARAQMIEDYGRLPDAMTACVGGGSNAIGLFHAFLNDASVRIYGAEAAGDGIATGRHAASIVAGRPGVLHGNRTYVVCDDDGQILETHSVSAGLDYPGVGPEHAFLADSGRVQYVGIRDEEALAAFHLLAHTEGILAALESSHAVAHTMTLARDLPKDALVLCNLSGRGDKDVHTIAAREGVRV.

Lys98 is modified (N6-(pyridoxal phosphate)lysine).

Belongs to the TrpB family. Tetramer of two alpha and two beta chains. Requires pyridoxal 5'-phosphate as cofactor.

The enzyme catalyses (1S,2R)-1-C-(indol-3-yl)glycerol 3-phosphate + L-serine = D-glyceraldehyde 3-phosphate + L-tryptophan + H2O. Its pathway is amino-acid biosynthesis; L-tryptophan biosynthesis; L-tryptophan from chorismate: step 5/5. Functionally, the beta subunit is responsible for the synthesis of L-tryptophan from indole and L-serine. This is Tryptophan synthase beta chain from Xylella fastidiosa (strain M23).